The primary structure comprises 147 residues: Prefoldin subunit alpha (147 aa).

The protein belongs to the prefoldin alpha subunit family. In terms of assembly, heterohexamer of two alpha and four beta subunits.

Its subcellular location is the cytoplasm. Functionally, molecular chaperone capable of stabilizing a range of proteins. Seems to fulfill an ATP-independent, HSP70-like function in archaeal de novo protein folding. This is Prefoldin subunit alpha from Saccharolobus islandicus (strain M.16.27) (Sulfolobus islandicus).